The sequence spans 393 residues: NAD(P)H-quinone oxidoreductase subunit H, chloroplastic (393 aa).

The protein belongs to the complex I 49 kDa subunit family. NDH is composed of at least 16 different subunits, 5 of which are encoded in the nucleus.

It is found in the plastid. Its subcellular location is the chloroplast thylakoid membrane. It carries out the reaction a plastoquinone + NADH + (n+1) H(+)(in) = a plastoquinol + NAD(+) + n H(+)(out). The catalysed reaction is a plastoquinone + NADPH + (n+1) H(+)(in) = a plastoquinol + NADP(+) + n H(+)(out). In terms of biological role, NDH shuttles electrons from NAD(P)H:plastoquinone, via FMN and iron-sulfur (Fe-S) centers, to quinones in the photosynthetic chain and possibly in a chloroplast respiratory chain. The immediate electron acceptor for the enzyme in this species is believed to be plastoquinone. Couples the redox reaction to proton translocation, and thus conserves the redox energy in a proton gradient. This is NAD(P)H-quinone oxidoreductase subunit H, chloroplastic from Arabis hirsuta (Hairy rock-cress).